Reading from the N-terminus, the 120-residue chain is Flagellar protein FliT (120 aa).

The interval 1 to 50 is required for homodimerization; that stretch reads MTNFIPSLTDWHALHALSITMLDLAHSGKWDELIEQEMNYVQLVEGIARN. A fliD binding region spans residues 59-97; the sequence is LINQAKEILNAVLRNEAELKTLLQHRMEELRQLIDQTGK.

It belongs to the FliT family. Homodimer. Interacts with FliD and FlhC.

Its subcellular location is the cytoplasm. The protein resides in the cytosol. Functionally, dual-function protein that regulates the transcription of class 2 flagellar operons and that also acts as an export chaperone for the filament-capping protein FliD. As a transcriptional regulator, acts as an anti-FlhDC factor; it directly binds FlhC, thus inhibiting the binding of the FlhC/FlhD complex to class 2 promoters, resulting in decreased expression of class 2 flagellar operons. As a chaperone, effects FliD transition to the membrane by preventing its premature polymerization, and by directing it to the export apparatus. The sequence is that of Flagellar protein FliT from Citrobacter koseri (strain ATCC BAA-895 / CDC 4225-83 / SGSC4696).